The primary structure comprises 603 residues: Outer envelope protein 64, mitochondrial (603 aa).

The residue at position 2 (serine 2) is an N-acetylserine. A helical transmembrane segment spans residues 16–32 (KVWVVIGVTVAGIVILA). TPR repeat units lie at residues 488–521 (SEVM…NGAN), 523–555 (TYYC…DKKN), and 556–589 (VKAY…EPQN).

In terms of tissue distribution, expressed in roots and flower buds. Detected in leaves.

Its subcellular location is the mitochondrion outer membrane. In terms of biological role, chaperone receptor mediating Hsp90-dependent protein targeting to mitochondria. In Arabidopsis thaliana (Mouse-ear cress), this protein is Outer envelope protein 64, mitochondrial (OM64).